The following is a 213-amino-acid chain: MKPYQRQFIEFALNKQVLKFGEFTLKSGRKSPYFFNAGLFNTGRDLALLGRFYAEALVDSGIDFDLLFGPAYKGIPIATTTAVALAEHHDRDVPYCFNRKEAKTHGEGGNLVGSELQGRIMLVDDVITAGTAIRESMEIIQANGASLAGVLISLDRQERGRGEISAIQEVERDYGCNVISIITLKDLIAYLEEKPEMADHLASVRAYREEFGV.

A 5-phospho-alpha-D-ribose 1-diphosphate-binding site is contributed by Lys26. Residue 34–35 (FF) participates in orotate binding. 5-phospho-alpha-D-ribose 1-diphosphate contacts are provided by residues 72-73 (YK), Arg99, Lys100, Lys103, His105, and 124-132 (DDVITAGTA). Positions 128 and 156 each coordinate orotate.

Belongs to the purine/pyrimidine phosphoribosyltransferase family. PyrE subfamily. In terms of assembly, homodimer. Requires Mg(2+) as cofactor.

It carries out the reaction orotidine 5'-phosphate + diphosphate = orotate + 5-phospho-alpha-D-ribose 1-diphosphate. The protein operates within pyrimidine metabolism; UMP biosynthesis via de novo pathway; UMP from orotate: step 1/2. Its function is as follows. Catalyzes the transfer of a ribosyl phosphate group from 5-phosphoribose 1-diphosphate to orotate, leading to the formation of orotidine monophosphate (OMP). The chain is Orotate phosphoribosyltransferase from Enterobacter sp. (strain 638).